The chain runs to 414 residues: Histidine--tRNA ligase (414 aa).

It belongs to the class-II aminoacyl-tRNA synthetase family. In terms of assembly, homodimer.

The protein localises to the cytoplasm. The catalysed reaction is tRNA(His) + L-histidine + ATP = L-histidyl-tRNA(His) + AMP + diphosphate + H(+). The protein is Histidine--tRNA ligase of Anaeromyxobacter dehalogenans (strain 2CP-1 / ATCC BAA-258).